We begin with the raw amino-acid sequence, 315 residues long: Beta-ketoacyl-[acyl-carrier-protein] synthase III 2 (315 aa).

Active-site residues include cysteine 113 and histidine 241. The interval 242-246 (QANLR) is ACP-binding. Asparagine 271 is a catalytic residue.

This sequence belongs to the thiolase-like superfamily. FabH family. In terms of assembly, homodimer.

It localises to the cytoplasm. It carries out the reaction malonyl-[ACP] + acetyl-CoA + H(+) = 3-oxobutanoyl-[ACP] + CO2 + CoA. It functions in the pathway lipid metabolism; fatty acid biosynthesis. In terms of biological role, catalyzes the condensation reaction of fatty acid synthesis by the addition to an acyl acceptor of two carbons from malonyl-ACP. Catalyzes the first condensation reaction which initiates fatty acid synthesis and may therefore play a role in governing the total rate of fatty acid production. Possesses both acetoacetyl-ACP synthase and acetyl transacylase activities. Its substrate specificity determines the biosynthesis of branched-chain and/or straight-chain of fatty acids. The protein is Beta-ketoacyl-[acyl-carrier-protein] synthase III 2 of Streptomyces avermitilis (strain ATCC 31267 / DSM 46492 / JCM 5070 / NBRC 14893 / NCIMB 12804 / NRRL 8165 / MA-4680).